Consider the following 62-residue polypeptide: Photosystem II reaction center protein Z (62 aa).

Helical transmembrane passes span 8 to 28 and 41 to 61; these read AVFA…VVFA and FSGT…NSLI.

Belongs to the PsbZ family. In terms of assembly, PSII is composed of 1 copy each of membrane proteins PsbA, PsbB, PsbC, PsbD, PsbE, PsbF, PsbH, PsbI, PsbJ, PsbK, PsbL, PsbM, PsbT, PsbY, PsbZ, Psb30/Ycf12, at least 3 peripheral proteins of the oxygen-evolving complex and a large number of cofactors. It forms dimeric complexes.

The protein resides in the plastid. It is found in the chloroplast thylakoid membrane. In terms of biological role, may control the interaction of photosystem II (PSII) cores with the light-harvesting antenna, regulates electron flow through the 2 photosystem reaction centers. PSII is a light-driven water plastoquinone oxidoreductase, using light energy to abstract electrons from H(2)O, generating a proton gradient subsequently used for ATP formation. The chain is Photosystem II reaction center protein Z from Citrus sinensis (Sweet orange).